Here is a 113-residue protein sequence, read N- to C-terminus: Putative pterin-4-alpha-carbinolamine dehydratase (113 aa).

Belongs to the pterin-4-alpha-carbinolamine dehydratase family.

It carries out the reaction (4aS,6R)-4a-hydroxy-L-erythro-5,6,7,8-tetrahydrobiopterin = (6R)-L-erythro-6,7-dihydrobiopterin + H2O. The sequence is that of Putative pterin-4-alpha-carbinolamine dehydratase from Pelodictyon phaeoclathratiforme (strain DSM 5477 / BU-1).